The following is a 705-amino-acid chain: SPbeta prophage-derived sublancin-168-processing and transport ATP-binding protein SunT (705 aa).

The Peptidase C39 domain maps to Gln12–Ile138. Residue Cys18 is part of the active site. The next 6 membrane-spanning stretches (helical) occupy residues Ile167 to Phe187, Leu205 to Val225, Ala281 to Tyr301, Ile306 to Phe326, Val388 to Trp408, and Ser418 to Leu438. The 283-residue stretch at Val168–Gln450 folds into the ABC transmembrane type-1 domain. The region spanning Ile483–Ile705 is the ABC transporter domain. Gly516–Ser523 lines the ATP pocket.

Belongs to the ABC transporter superfamily. SunT family. As to quaternary structure, homodimer.

It is found in the cell membrane. SunT (TC 3.A.1.112.4) is required for production of the lantibiotic sublancin-168, probably by both processing the signal peptide and exporting the resulting mature lantibiotic. This chain is SPbeta prophage-derived sublancin-168-processing and transport ATP-binding protein SunT (sunT), found in Bacillus subtilis (strain 168).